The following is a 230-amino-acid chain: Uracil-DNA glycosylase (230 aa).

Aspartate 70 functions as the Proton acceptor in the catalytic mechanism.

Belongs to the uracil-DNA glycosylase (UDG) superfamily. UNG family.

The protein localises to the cytoplasm. It catalyses the reaction Hydrolyzes single-stranded DNA or mismatched double-stranded DNA and polynucleotides, releasing free uracil.. Its function is as follows. Excises uracil residues from the DNA which can arise as a result of misincorporation of dUMP residues by DNA polymerase or due to deamination of cytosine. This is Uracil-DNA glycosylase from Pseudomonas savastanoi pv. phaseolicola (strain 1448A / Race 6) (Pseudomonas syringae pv. phaseolicola (strain 1448A / Race 6)).